A 170-amino-acid chain; its full sequence is RNA pyrophosphohydrolase (170 aa).

The Nudix hydrolase domain maps to 9–162 (PYRPCAGIMV…KRAVYEKVVA (154 aa)). The Nudix box signature appears at 50 to 71 (GGIDDGERPLTAAIRELYEETG).

The protein belongs to the Nudix hydrolase family. RppH subfamily. Requires a divalent metal cation as cofactor.

In terms of biological role, accelerates the degradation of transcripts by removing pyrophosphate from the 5'-end of triphosphorylated RNA, leading to a more labile monophosphorylated state that can stimulate subsequent ribonuclease cleavage. The protein is RNA pyrophosphohydrolase of Agrobacterium fabrum (strain C58 / ATCC 33970) (Agrobacterium tumefaciens (strain C58)).